Reading from the N-terminus, the 773-residue chain is Ethylene receptor 2 (773 aa).

Helical transmembrane passes span 4-24 (EIAS…VLAI), 53-73 (VSDF…LYFV), 82-102 (WVLF…LLHG), and 122-142 (LTAL…PLLL). 2 residues coordinate Cu cation: cysteine 94 and histidine 98. Positions 187–331 (DRHTILYTTL…VVADQVTVAL (145 aa)) constitute a GAF domain. Residues 374–614 (TMSEGMRRPM…PETMSLLLRF (241 aa)) enclose the Histidine kinase domain. Positions 647 to 766 (QVLLVDTNDS…AMESELRRVL (120 aa)) constitute a Response regulatory domain. Position 702 is a 4-aspartylphosphate (aspartate 702). A Glycyl lysine isopeptide (Lys-Gly) (interchain with G-Cter in ubiquitin) cross-link involves residue lysine 751.

Belongs to the ethylene receptor family. Heteromer with ETR1. Binds to MRF3/ECIP1. The cofactor is Cu cation. Autophosphorylated predominantly on Ser residues. As to expression, expressed in seedlings, roots, leaves, flowers, mature siliques, shoot apical meristems, leaf primordia, inflorescence meristems, young floral meristems, developing petals, carpels and ovules. Low expression in stamens.

It is found in the endoplasmic reticulum membrane. Functionally, ethylene receptor related to bacterial two-component regulators. Acts as a redundant negative regulator of ethylene signaling. The chain is Ethylene receptor 2 from Arabidopsis thaliana (Mouse-ear cress).